The following is a 507-amino-acid chain: Maturase K (507 aa).

It belongs to the intron maturase 2 family. MatK subfamily.

Its subcellular location is the plastid. It localises to the chloroplast. In terms of biological role, usually encoded in the trnK tRNA gene intron. Probably assists in splicing its own and other chloroplast group II introns. The polypeptide is Maturase K (Fagopyrum esculentum (Common buckwheat)).